The sequence spans 194 residues: PRELI domain containing protein 3B (194 aa).

Positions 1–172 (MKIWTSEHVF…VIHKLNAEIE (172 aa)) constitute a PRELI/MSF1 domain. Ser46 and Ser51 each carry phosphoserine.

The protein belongs to the slowmo family.

In Sus scrofa (Pig), this protein is PRELI domain containing protein 3B (PRELID3B).